The following is a 178-amino-acid chain: Large ribosomal subunit protein bL25 (178 aa).

It belongs to the bacterial ribosomal protein bL25 family. CTC subfamily. In terms of assembly, part of the 50S ribosomal subunit; part of the 5S rRNA/L5/L18/L25 subcomplex. Contacts the 5S rRNA. Binds to the 5S rRNA independently of L5 and L18.

Functionally, this is one of the proteins that binds to the 5S RNA in the ribosome where it forms part of the central protuberance. This chain is Large ribosomal subunit protein bL25, found in Helicobacter pylori (strain HPAG1).